The following is a 213-amino-acid chain: ATP phosphoribosyltransferase (213 aa).

The protein belongs to the ATP phosphoribosyltransferase family. Short subfamily. As to quaternary structure, heteromultimer composed of HisG and HisZ subunits.

The protein localises to the cytoplasm. The catalysed reaction is 1-(5-phospho-beta-D-ribosyl)-ATP + diphosphate = 5-phospho-alpha-D-ribose 1-diphosphate + ATP. It participates in amino-acid biosynthesis; L-histidine biosynthesis; L-histidine from 5-phospho-alpha-D-ribose 1-diphosphate: step 1/9. Its function is as follows. Catalyzes the condensation of ATP and 5-phosphoribose 1-diphosphate to form N'-(5'-phosphoribosyl)-ATP (PR-ATP). Has a crucial role in the pathway because the rate of histidine biosynthesis seems to be controlled primarily by regulation of HisG enzymatic activity. This is ATP phosphoribosyltransferase from Bacillus velezensis (strain DSM 23117 / BGSC 10A6 / LMG 26770 / FZB42) (Bacillus amyloliquefaciens subsp. plantarum).